A 364-amino-acid chain; its full sequence is MSCIAVEAVLLGILLYIPIVLSDDRAPIPANSAQLNSWFDGIIQPVAVRKATMDPALVTAEGQAKVIKLKSDGSGDFKSINEAIKSIPDDNTKRVILSFSPGNYSEKVKIGMYKHYITFYGEDPNNMPILVFGGTAAEYGTVDSATLIVESNYFSAVNLKIVNSAPRPDGKRVGAQAAALRISGDKASFYNVKIYGFQDTLCDDKGKHFYKDCYIEGTVDFIFGSGKSIFLNTELHAVPGDQPAIITAQARKTESEDTGYYFVNCRVTGGGAFLGRSWMPAAKVVFAYTEMGDAIHPEGWILVKPEHESTVRFPEYNNKGPGANMEKRAKFVKRLSDAEAKQSISLGSIEASKWLLPPRVVGLP.

An N-terminal signal peptide occupies residues 1 to 22 (MSCIAVEAVLLGILLYIPIVLS). The N-linked (GlcNAc...) asparagine glycan is linked to Asn-103. Asp-220 is a catalytic residue.

It is found in the secreted. The catalysed reaction is [(1-&gt;4)-alpha-D-galacturonosyl methyl ester](n) + n H2O = [(1-&gt;4)-alpha-D-galacturonosyl](n) + n methanol + n H(+). It functions in the pathway glycan metabolism; pectin degradation; 2-dehydro-3-deoxy-D-gluconate from pectin: step 1/5. In terms of biological role, catalyzes the demethylesterification of homogalacturonan components of pectin. The protein is Pectinesterase of Parthenium hysterophorus (Santa Maria feverfew).